Here is a 494-residue protein sequence, read N- to C-terminus: ATP synthase subunit beta, plastid (494 aa).

169–176 (GGAGVGKT) is an ATP binding site.

It belongs to the ATPase alpha/beta chains family. In terms of assembly, F-type ATPases have 2 components, CF(1) - the catalytic core - and CF(0) - the membrane proton channel. CF(1) has five subunits: alpha(3), beta(3), gamma(1), delta(1), epsilon(1). CF(0) has four main subunits: a(1), b(1), b'(1) and c(9-12).

Its subcellular location is the plastid thylakoid membrane. The catalysed reaction is ATP + H2O + 4 H(+)(in) = ADP + phosphate + 5 H(+)(out). Produces ATP from ADP in the presence of a proton gradient across the membrane. The catalytic sites are hosted primarily by the beta subunits. In Cuscuta gronovii (Common dodder), this protein is ATP synthase subunit beta, plastid (atpB).